A 248-amino-acid polypeptide reads, in one-letter code: PF03932 family protein CutC (248 aa).

Belongs to the CutC family. In terms of assembly, homodimer.

Its subcellular location is the cytoplasm. The chain is PF03932 family protein CutC from Escherichia coli O45:K1 (strain S88 / ExPEC).